The chain runs to 428 residues: 3-phosphoshikimate 1-carboxyvinyltransferase (428 aa).

3 residues coordinate 3-phosphoshikimate: lysine 22, serine 23, and arginine 27. Lysine 22 is a binding site for phosphoenolpyruvate. Phosphoenolpyruvate contacts are provided by glycine 94 and arginine 122. Positions 169, 170, 171, 197, 315, and 342 each coordinate 3-phosphoshikimate. Glutamine 171 lines the phosphoenolpyruvate pocket. The active-site Proton acceptor is the aspartate 315. Residues arginine 346, arginine 389, and lysine 414 each contribute to the phosphoenolpyruvate site.

It belongs to the EPSP synthase family. In terms of assembly, monomer.

The protein localises to the cytoplasm. It catalyses the reaction 3-phosphoshikimate + phosphoenolpyruvate = 5-O-(1-carboxyvinyl)-3-phosphoshikimate + phosphate. Its pathway is metabolic intermediate biosynthesis; chorismate biosynthesis; chorismate from D-erythrose 4-phosphate and phosphoenolpyruvate: step 6/7. In terms of biological role, catalyzes the transfer of the enolpyruvyl moiety of phosphoenolpyruvate (PEP) to the 5-hydroxyl of shikimate-3-phosphate (S3P) to produce enolpyruvyl shikimate-3-phosphate and inorganic phosphate. The polypeptide is 3-phosphoshikimate 1-carboxyvinyltransferase (Cellvibrio japonicus (strain Ueda107) (Pseudomonas fluorescens subsp. cellulosa)).